Consider the following 724-residue polypeptide: Ribosomal protein S6 kinase alpha-1 (724 aa).

Residue S54 is modified to Phosphoserine. In terms of domain architecture, Protein kinase 1 spans 62 to 310 (FELLKVLGQG…AEEIKRHIFY (249 aa)). ATP-binding positions include 68–76 (LGQGSFGKV) and K94. D187 (proton acceptor) is an active-site residue. A Phosphoserine; by PDPK1 modification is found at S221. Phosphoserine is present on S296. Residues 311–380 (STIDWNKLYR…VATGLMEDDG (70 aa)) enclose the AGC-kinase C-terminal domain. A Phosphothreonine modification is found at T348. S352, S358, and S369 each carry phosphoserine. Positions 407-664 (YVVKETIGVG…AKQVLQHPWI (258 aa)) constitute a Protein kinase 2 domain. ATP contacts are provided by residues 413 to 421 (IGVGSYSVC) and K436. The active-site Proton acceptor is the D524. Phosphothreonine is present on T562. Position 721 is a phosphoserine (S721).

The protein belongs to the protein kinase superfamily. AGC Ser/Thr protein kinase family. S6 kinase subfamily. As to quaternary structure, forms a complex with either MAPK1/ERK2 or MAPK3/ERK1 in quiescent cells. Transiently dissociates following mitogenic stimulation. Interacts with ETV1/ER81 and FGFR1. The cofactor is Mg(2+). In terms of processing, activated by phosphorylation at Ser-221 by PDPK1. Autophosphorylated on Ser-369, as part of the activation process. May be phosphorylated at Thr-348 and Ser-352 by MAPK1/ERK2 and MAPK3/ERK1. N-terminal myristoylation results in an activated kinase in the absence of added growth factors. Intestine, thymus, and lung.

Its subcellular location is the nucleus. It localises to the cytoplasm. The enzyme catalyses L-seryl-[protein] + ATP = O-phospho-L-seryl-[protein] + ADP + H(+). It catalyses the reaction L-threonyl-[protein] + ATP = O-phospho-L-threonyl-[protein] + ADP + H(+). Its activity is regulated as follows. Upon extracellular signal or mitogen stimulation, phosphorylated at Thr-562 in the C-terminal kinase domain (CTKD) by MAPK1/ERK2 and MAPK3/ERK1. The activated CTKD then autophosphorylates Ser-369, allowing binding of PDPK1, which in turn phosphorylates Ser-221 in the N-terminal kinase domain (NTDK) leading to the full activation of the protein and subsequent phosphorylation of the substrates by the NTKD. Serine/threonine-protein kinase that acts downstream of ERK (MAPK1/ERK2 and MAPK3/ERK1) signaling and mediates mitogenic and stress-induced activation of the transcription factors CREB1, ETV1/ER81 and NR4A1/NUR77, regulates translation through RPS6 and EIF4B phosphorylation, and mediates cellular proliferation, survival, and differentiation by modulating mTOR signaling and repressing pro-apoptotic function of BAD and DAPK1. In fibroblast, is required for EGF-stimulated phosphorylation of CREB1, which results in the subsequent transcriptional activation of several immediate-early genes. In response to mitogenic stimulation (EGF and PMA), phosphorylates and activates NR4A1/NUR77 and ETV1/ER81 transcription factors and the cofactor CREBBP. Upon insulin-derived signal, acts indirectly on the transcription regulation of several genes by phosphorylating GSK3B at 'Ser-9' and inhibiting its activity. Phosphorylates RPS6 in response to serum or EGF via an mTOR-independent mechanism and promotes translation initiation by facilitating assembly of the pre-initiation complex. In response to insulin, phosphorylates EIF4B, enhancing EIF4B affinity for the EIF3 complex and stimulating cap-dependent translation. Is involved in the mTOR nutrient-sensing pathway by directly phosphorylating TSC2 at 'Ser-1798', which potently inhibits TSC2 ability to suppress mTOR signaling, and mediates phosphorylation of RPTOR, which regulates mTORC1 activity and may promote rapamycin-sensitive signaling independently of the PI3K/AKT pathway. Also involved in feedback regulation of mTORC1 and mTORC2 by phosphorylating DEPTOR. Mediates cell survival by phosphorylating the pro-apoptotic proteins BAD and DAPK1 and suppressing their pro-apoptotic function. Promotes the survival of hepatic stellate cells by phosphorylating CEBPB in response to the hepatotoxin carbon tetrachloride (CCl4). Mediates induction of hepatocyte prolifration by TGFA through phosphorylation of CEBPB. Is involved in cell cycle regulation by phosphorylating the CDK inhibitor CDKN1B, which promotes CDKN1B association with 14-3-3 proteins and prevents its translocation to the nucleus and inhibition of G1 progression. Phosphorylates EPHA2 at 'Ser-897', the RPS6KA-EPHA2 signaling pathway controls cell migration. In response to mTORC1 activation, phosphorylates EIF4B at 'Ser-406' and 'Ser-422' which stimulates bicarbonate cotransporter SLC4A7 mRNA translation, increasing SLC4A7 protein abundance and function. The sequence is that of Ribosomal protein S6 kinase alpha-1 (Rps6ka1) from Mus musculus (Mouse).